The chain runs to 67 residues: Type 3 secretion system chaperone PscE (67 aa).

A coiled-coil region spans residues 16–37 (HAAALRQRLQAALAECRRELAR).

The protein belongs to the YscE family. In terms of assembly, forms a stable ternary complex with PscF/SctF and PscG within the cytoplasm. Co-stabilized by PscG.

The protein localises to the cytoplasm. Chaperone of the type III secretion system (T3SS), also called injectisome, which is used to inject bacterial effector proteins into eukaryotic host cells, facilitating the establishment and dissemination of infection. Along with PscG, prevents premature polymerization of the PscF/SctF needle protein within the cytoplasm. Required for type III secretion needle assembly. Also required for cytotoxicity by influencing PscF/SctF levels. The chain is Type 3 secretion system chaperone PscE (pscE) from Pseudomonas aeruginosa (strain ATCC 15692 / DSM 22644 / CIP 104116 / JCM 14847 / LMG 12228 / 1C / PRS 101 / PAO1).